The sequence spans 83 residues: Cardiotoxin 7a (83 aa).

Positions 1 to 21 are cleaved as a signal peptide; it reads MKTLLLTLVVVTIVCLDLGYT. 4 cysteine pairs are disulfide-bonded: C24–C43, C36–C61, C65–C76, and C77–C82.

Belongs to the three-finger toxin family. Short-chain subfamily. Orphan group XV sub-subfamily. Expressed by the venom gland.

It is found in the secreted. It localises to the target cell membrane. Functionally, has low cytotoxic activity. This is Cardiotoxin 7a from Naja atra (Chinese cobra).